Consider the following 440-residue polypeptide: Chromosome partition protein MukF (440 aa).

Residues 208-236 (LSETSGTLRELQDTLEAAGDKLQANLLRI) are leucine-zipper.

Belongs to the MukF family. In terms of assembly, interacts, and probably forms a ternary complex, with MukE and MukB via its C-terminal region. The complex formation is stimulated by calcium or magnesium. It is required for an interaction between MukE and MukB.

The protein resides in the cytoplasm. It localises to the nucleoid. In terms of biological role, involved in chromosome condensation, segregation and cell cycle progression. May participate in facilitating chromosome segregation by condensation DNA from both sides of a centrally located replisome during cell division. Not required for mini-F plasmid partitioning. Probably acts via its interaction with MukB and MukE. Overexpression results in anucleate cells. It has a calcium binding activity. The chain is Chromosome partition protein MukF from Edwardsiella ictaluri (strain 93-146).